The sequence spans 269 residues: Phosphate import ATP-binding protein PstB (269 aa).

The ABC transporter domain occupies 21 to 264 (SEVRNLSFYY…PKNKQTEDYI (244 aa)). 53–60 (GPSGCGKS) contacts ATP.

This sequence belongs to the ABC transporter superfamily. Phosphate importer (TC 3.A.1.7) family. In terms of assembly, the complex is composed of two ATP-binding proteins (PstB), two transmembrane proteins (PstC and PstA) and a solute-binding protein (PstS).

The protein resides in the cell inner membrane. It carries out the reaction phosphate(out) + ATP + H2O = ADP + 2 phosphate(in) + H(+). Functionally, part of the ABC transporter complex PstSACB involved in phosphate import. Responsible for energy coupling to the transport system. In Nitrosospira multiformis (strain ATCC 25196 / NCIMB 11849 / C 71), this protein is Phosphate import ATP-binding protein PstB.